A 187-amino-acid chain; its full sequence is Elongation factor P (187 aa).

Belongs to the elongation factor P family.

The protein resides in the cytoplasm. The protein operates within protein biosynthesis; polypeptide chain elongation. Functionally, involved in peptide bond synthesis. Stimulates efficient translation and peptide-bond synthesis on native or reconstituted 70S ribosomes in vitro. Probably functions indirectly by altering the affinity of the ribosome for aminoacyl-tRNA, thus increasing their reactivity as acceptors for peptidyl transferase. The polypeptide is Elongation factor P (Bifidobacterium animalis subsp. lactis (strain AD011)).